A 116-amino-acid polypeptide reads, in one-letter code: Ferredoxin-like protein in nif region (116 aa).

A 4Fe-4S ferredoxin-type domain is found at 2 to 29 (AYTITSQCISCKLCSSVCPTGAIKIAEN). Residues C9, C12, C15, and C19 each coordinate iron-sulfur cluster.

This Nostoc sp. (strain PCC 7120 / SAG 25.82 / UTEX 2576) protein is Ferredoxin-like protein in nif region (fdxN).